Consider the following 511-residue polypeptide: Lysine--tRNA ligase 2 (511 aa).

The segment covering 1-11 has biased composition (polar residues); it reads MTMEINNTDPS. Residues 1–21 form a disordered region; that stretch reads MTMEINNTDPSENMPLPDDVD. Positions 421 and 428 each coordinate Mg(2+).

It belongs to the class-II aminoacyl-tRNA synthetase family. As to quaternary structure, homodimer. Mg(2+) is required as a cofactor.

The protein resides in the cytoplasm. The catalysed reaction is tRNA(Lys) + L-lysine + ATP = L-lysyl-tRNA(Lys) + AMP + diphosphate. The protein is Lysine--tRNA ligase 2 of Methanosarcina acetivorans (strain ATCC 35395 / DSM 2834 / JCM 12185 / C2A).